Consider the following 364-residue polypeptide: Aminomethyltransferase (364 aa).

The protein belongs to the GcvT family. The glycine cleavage system is composed of four proteins: P, T, L and H.

The enzyme catalyses N(6)-[(R)-S(8)-aminomethyldihydrolipoyl]-L-lysyl-[protein] + (6S)-5,6,7,8-tetrahydrofolate = N(6)-[(R)-dihydrolipoyl]-L-lysyl-[protein] + (6R)-5,10-methylene-5,6,7,8-tetrahydrofolate + NH4(+). Functionally, the glycine cleavage system catalyzes the degradation of glycine. This Enterobacter sp. (strain 638) protein is Aminomethyltransferase.